Reading from the N-terminus, the 348-residue chain is Protein RecA (348 aa).

66-73 (GPESSGKT) provides a ligand contact to ATP.

Belongs to the RecA family.

The protein localises to the cytoplasm. In terms of biological role, can catalyze the hydrolysis of ATP in the presence of single-stranded DNA, the ATP-dependent uptake of single-stranded DNA by duplex DNA, and the ATP-dependent hybridization of homologous single-stranded DNAs. It interacts with LexA causing its activation and leading to its autocatalytic cleavage. This chain is Protein RecA, found in Burkholderia lata (strain ATCC 17760 / DSM 23089 / LMG 22485 / NCIMB 9086 / R18194 / 383).